The primary structure comprises 496 residues: Solute carrier family 2, facilitated glucose transporter member 3 (496 aa).

Topologically, residues 1 to 10 (MGTQKVTPAL) are cytoplasmic. The chain crosses the membrane as a helical span at residues 11 to 32 (IFAITVATIGSFQFGYNTGVIN). Topologically, residues 33-64 (APEKIIKEFINKTLTDKGNAPPSEVLLTSLWS) are extracellular. N-linked (GlcNAc...) asparagine glycosylation is present at N43. A helical membrane pass occupies residues 65 to 85 (LSVAIFSVGGMIGSFSVGLFV). The Cytoplasmic portion of the chain corresponds to 86 to 90 (NRFGR). Residues 91–111 (RNSMLIVNLLAVTGGCFMGLC) traverse the membrane as a helical segment. The Extracellular segment spans residues 112–118 (KVAKSVE). Residues 119–142 (MLILGRLVIGLFCGLCTGFVPMYI) form a helical membrane-spanning segment. At 143–153 (GEISPTALRGA) the chain is on the cytoplasmic side. A helical transmembrane segment spans residues 154-174 (FGTLNQLGIVVGILVAQIFGL). Residue Q159 coordinates D-glucose. Topologically, residues 175–183 (EFILGSEEL) are extracellular. The chain crosses the membrane as a helical span at residues 184–204 (WPLLLGFTILPAILQSAALPF). At 205–269 (CPESPRFLLI…LFRVSSYRQP (65 aa)) the chain is on the cytoplasmic side. Position 232 is a phosphothreonine (T232). Residues 270-290 (IIISIVLQLSQQLSGINAVFY) traverse the membrane as a helical segment. Positions 277-279 (QLS) are important for selectivity against fructose. Residues 280-281 (QQ) and N286 each bind D-glucose. Residues 291–304 (YSTGIFKDAGVQEP) lie on the Extracellular side of the membrane. The chain crosses the membrane as a helical span at residues 305–325 (IYATIGAGVVNTIFTVVSLFL). D-glucose is bound at residue N315. The Cytoplasmic segment spans residues 326–331 (VERAGR). Residues 332–352 (RTLHMIGLGGMAFCSTLMTVS) form a helical membrane-spanning segment. The Extracellular portion of the chain corresponds to 353-363 (LLLKDNYNGMS). A helical transmembrane segment spans residues 364 to 389 (FVCIGAILVFVAFFEIGPGPIPWFIV). D-glucose is bound by residues E378 and W386. The Cytoplasmic portion of the chain corresponds to 390-399 (AELFSQGPRP). The helical transmembrane segment at 400-420 (AAMAVAGCSNWTSNFLVGLLF) threads the bilayer. The Extracellular portion of the chain corresponds to 421-429 (PSAAHYLGA). A helical transmembrane segment spans residues 430 to 450 (YVFIIFTGFLITFLAFTFFKV). Residues 451–496 (PETRGRTFEDITRAFEGQAHGADRSGKDGVMEMNSIEPAKETTTNV) are Cytoplasmic-facing. 2 positions are modified to phosphoserine: S475 and S485. The residue at position 492 (T492) is a Phosphothreonine.

It belongs to the major facilitator superfamily. Sugar transporter (TC 2.A.1.1) family. Glucose transporter subfamily. In terms of assembly, interacts with SMIM43; the interaction may promote SLC2A3-mediated glucose transport to meet the energy needs of mesendoderm differentiation. As to expression, highly expressed in brain. Expressed in many tissues.

It is found in the cell membrane. The protein localises to the perikaryon. Its subcellular location is the cell projection. It carries out the reaction D-glucose(out) = D-glucose(in). The enzyme catalyses D-galactose(in) = D-galactose(out). With respect to regulation, deoxyglucose transport is inhibited by D-glucose, D-galactose and maltose. Galactose transport is inhibited by D-glucose and maltose. Facilitative glucose transporter. Can also mediate the uptake of various other monosaccharides across the cell membrane. Mediates the uptake of glucose, 2-deoxyglucose, galactose, mannose, xylose and fucose, and probably also dehydroascorbate. Does not mediate fructose transport. Required for mesendoderm differentiation. The sequence is that of Solute carrier family 2, facilitated glucose transporter member 3 from Homo sapiens (Human).